A 150-amino-acid polypeptide reads, in one-letter code: D-aminoacyl-tRNA deacylase (150 aa).

Residues 137–138 carry the Gly-cisPro motif, important for rejection of L-amino acids motif; that stretch reads GP.

It belongs to the DTD family. As to quaternary structure, homodimer.

Its subcellular location is the cytoplasm. It catalyses the reaction glycyl-tRNA(Ala) + H2O = tRNA(Ala) + glycine + H(+). The enzyme catalyses a D-aminoacyl-tRNA + H2O = a tRNA + a D-alpha-amino acid + H(+). An aminoacyl-tRNA editing enzyme that deacylates mischarged D-aminoacyl-tRNAs. Also deacylates mischarged glycyl-tRNA(Ala), protecting cells against glycine mischarging by AlaRS. Acts via tRNA-based rather than protein-based catalysis; rejects L-amino acids rather than detecting D-amino acids in the active site. By recycling D-aminoacyl-tRNA to D-amino acids and free tRNA molecules, this enzyme counteracts the toxicity associated with the formation of D-aminoacyl-tRNA entities in vivo and helps enforce protein L-homochirality. This Geotalea daltonii (strain DSM 22248 / JCM 15807 / FRC-32) (Geobacter daltonii) protein is D-aminoacyl-tRNA deacylase.